We begin with the raw amino-acid sequence, 288 residues long: Pantothenate synthetase (288 aa).

ATP is bound at residue 30-37 (MGFLHEGH). His-37 (proton donor) is an active-site residue. Gln-61 is a (R)-pantoate binding site. Beta-alanine is bound at residue Gln-61. 147–150 (GMKD) is an ATP binding site. Position 153 (Gln-153) interacts with (R)-pantoate. 184 to 187 (KSSR) serves as a coordination point for ATP.

Belongs to the pantothenate synthetase family. Homodimer.

The protein resides in the cytoplasm. The enzyme catalyses (R)-pantoate + beta-alanine + ATP = (R)-pantothenate + AMP + diphosphate + H(+). It functions in the pathway cofactor biosynthesis; (R)-pantothenate biosynthesis; (R)-pantothenate from (R)-pantoate and beta-alanine: step 1/1. Catalyzes the condensation of pantoate with beta-alanine in an ATP-dependent reaction via a pantoyl-adenylate intermediate. The chain is Pantothenate synthetase from Bacillus licheniformis (strain ATCC 14580 / DSM 13 / JCM 2505 / CCUG 7422 / NBRC 12200 / NCIMB 9375 / NCTC 10341 / NRRL NRS-1264 / Gibson 46).